Consider the following 384-residue polypeptide: tRNA-specific 2-thiouridylase MnmA (384 aa).

Residues 9–16 and M35 each bind ATP; that span reads GMSGGVDS. Residues 95-97 are interaction with target base in tRNA; it reads NPD. Residue C100 is the Nucleophile of the active site. A disulfide bridge connects residues C100 and C196. G124 contributes to the ATP binding site. The interval 146 to 148 is interaction with tRNA; sequence KDQ. The Cysteine persulfide intermediate role is filled by C196. The segment at 308-309 is interaction with tRNA; sequence RY.

It belongs to the MnmA/TRMU family.

It is found in the cytoplasm. The catalysed reaction is S-sulfanyl-L-cysteinyl-[protein] + uridine(34) in tRNA + AH2 + ATP = 2-thiouridine(34) in tRNA + L-cysteinyl-[protein] + A + AMP + diphosphate + H(+). Its function is as follows. Catalyzes the 2-thiolation of uridine at the wobble position (U34) of tRNA, leading to the formation of s(2)U34. The sequence is that of tRNA-specific 2-thiouridylase MnmA from Burkholderia vietnamiensis (strain G4 / LMG 22486) (Burkholderia cepacia (strain R1808)).